Reading from the N-terminus, the 68-residue chain is ATP synthase F(0) complex subunit 8 (68 aa).

The chain crosses the membrane as a helical span at residues 8–24 (TWFTIIMAMLPTLYLIT). An N6-acetyllysine; alternate modification is found at K54. The residue at position 54 (K54) is an N6-succinyllysine; alternate. At K57 the chain carries N6-acetyllysine.

It belongs to the ATPase protein 8 family. Component of the ATP synthase complex composed at least of ATP5F1A/subunit alpha, ATP5F1B/subunit beta, ATP5MC1/subunit c (homooctomer), MT-ATP6/subunit a, MT-ATP8/subunit 8, ATP5ME/subunit e, ATP5MF/subunit f, ATP5MG/subunit g, ATP5MK/subunit k, ATP5MJ/subunit j, ATP5F1C/subunit gamma, ATP5F1D/subunit delta, ATP5F1E/subunit epsilon, ATP5PF/subunit F6, ATP5PB/subunit b, ATP5PD/subunit d, ATP5PO/subunit OSCP. ATP synthase complex consists of a soluble F(1) head domain (subunits alpha(3) and beta(3)) - the catalytic core - and a membrane F(0) domain - the membrane proton channel (subunits c, a, 8, e, f, g, k and j). These two domains are linked by a central stalk (subunits gamma, delta, and epsilon) rotating inside the F1 region and a stationary peripheral stalk (subunits F6, b, d, and OSCP). Interacts with PRICKLE3.

It localises to the mitochondrion membrane. Functionally, subunit 8, of the mitochondrial membrane ATP synthase complex (F(1)F(0) ATP synthase or Complex V) that produces ATP from ADP in the presence of a proton gradient across the membrane which is generated by electron transport complexes of the respiratory chain. ATP synthase complex consist of a soluble F(1) head domain - the catalytic core - and a membrane F(1) domain - the membrane proton channel. These two domains are linked by a central stalk rotating inside the F(1) region and a stationary peripheral stalk. During catalysis, ATP synthesis in the catalytic domain of F(1) is coupled via a rotary mechanism of the central stalk subunits to proton translocation. In vivo, can only synthesize ATP although its ATP hydrolase activity can be activated artificially in vitro. Part of the complex F(0) domain. The protein is ATP synthase F(0) complex subunit 8 of Papio hamadryas (Hamadryas baboon).